The following is a 320-amino-acid chain: o-succinylbenzoate synthase (320 aa).

Lys-133 functions as the Proton donor in the catalytic mechanism. Mg(2+) is bound by residues Asp-161, Glu-190, and Asp-213. The active-site Proton acceptor is Lys-235.

It belongs to the mandelate racemase/muconate lactonizing enzyme family. MenC type 1 subfamily. Requires a divalent metal cation as cofactor.

It catalyses the reaction (1R,6R)-6-hydroxy-2-succinyl-cyclohexa-2,4-diene-1-carboxylate = 2-succinylbenzoate + H2O. The protein operates within quinol/quinone metabolism; 1,4-dihydroxy-2-naphthoate biosynthesis; 1,4-dihydroxy-2-naphthoate from chorismate: step 4/7. It participates in quinol/quinone metabolism; menaquinone biosynthesis. Functionally, converts 2-succinyl-6-hydroxy-2,4-cyclohexadiene-1-carboxylate (SHCHC) to 2-succinylbenzoate (OSB). In Salmonella paratyphi A (strain ATCC 9150 / SARB42), this protein is o-succinylbenzoate synthase.